Reading from the N-terminus, the 1109-residue chain is Zinc finger E-box-binding homeobox 1 (1109 aa).

2 disordered regions span residues 1–106 and 123–143; these read MADG…DPNV and PEEDQRQGTPEASGHDDNGTP. Positions 15-30 are enriched in low complexity; it reads PRRNNVTNYNTVVEAN. Ser31 and Ser33 each carry phosphoserine. A compositionally biased stretch (acidic residues) spans 87–98; it reads VKDDECDSDAEN. The C2H2-type 1 zinc-finger motif lies at 150 to 173; it reads LTCPYCDRGYKRFTSLKEHIKYRH. Glycyl lysine isopeptide (Lys-Gly) (interchain with G-Cter in SUMO2) cross-links involve residues Lys166 and Lys175. 2 C2H2-type zinc fingers span residues 180–202 and 220–242; these read FSCSLCSYTFAYRTQLERHMTSH and FKCTECGKAFKYKHHLKEHLRIH. The C2H2-type 4; atypical zinc finger occupies 248–272; sequence YECPNCKKRFSHSGSYSSHISSKKC. The disordered stretch occupies residues 278-307; it reads VNGRPRSGLKTSQCSSPSLSTSPGSPTRPQ. Lys287 is covalently cross-linked (Glycyl lysine isopeptide (Lys-Gly) (interchain with G-Cter in SUMO2)). Residues 288–304 are compositionally biased toward low complexity; it reads TSQCSSPSLSTSPGSPT. Phosphoserine occurs at positions 293 and 302. Residues Lys311 and Lys315 each participate in a glycyl lysine isopeptide (Lys-Gly) (interchain with G-Cter in SUMO2) cross-link. A Glycyl lysine isopeptide (Lys-Gly) (interchain with G-Cter in SUMO); alternate cross-link involves residue Lys327. Lys327 participates in a covalent cross-link: Glycyl lysine isopeptide (Lys-Gly) (interchain with G-Cter in SUMO2); alternate. Glycyl lysine isopeptide (Lys-Gly) (interchain with G-Cter in SUMO2) cross-links involve residues Lys419, Lys473, Lys484, Lys495, and Lys528. Disordered regions lie at residues 468 to 501, 525 to 566, and 614 to 711; these read VPQNLKKENPAPPKSCKSEKSPEDLTVKSEKDKS, PELK…SQPP, and QIPG…PQVE. Positions 483–501 are enriched in basic and acidic residues; sequence CKSEKSPEDLTVKSEKDKS. A DNA-binding region (homeobox; atypical) is located at residues 559-618; sequence DLSPSQPPLKNLLSLLKAYYALNAQPSTEELTKIADSVNLPLDVVKKWFEKMQAGQIPGQ. The segment covering 654-665 has biased composition (polar residues); sequence RGQSPLKMTSSP. 4 positions are modified to phosphoserine: Ser657, Ser664, Ser671, and Ser678. Residues 673–703 show a composition bias toward polar residues; that stretch reads INGSRSCTSSPSPLNLSSARNPQGYSCVSEG. Phosphothreonine is present on Thr680. Ser682 carries the post-translational modification Phosphoserine. Lys752 is covalently cross-linked (Glycyl lysine isopeptide (Lys-Gly) (interchain with G-Cter in SUMO); alternate). A Glycyl lysine isopeptide (Lys-Gly) (interchain with G-Cter in SUMO2); alternate cross-link involves residue Lys752. Residues 834 to 873 form a disordered region; that stretch reads PPVKVIQPNGNQDERQDTSSEGVSVEDQNDSDCTPPKKKT. 2 consecutive C2H2-type zinc fingers follow at residues 881–903 and 909–931; these read YACDLCDKIFQKSSSLLRHKYEH and HECGICRKAFKHKHHLIEHMRLH. Residues 937–958 form a C2H2-type 7; atypical zinc finger; the sequence is YQCDKCGKRFSHSGSYSQHMNH. Residues 968 to 1109 are disordered; the sequence is EDRDAMEQED…RLSEEKTNEA (142 aa). Residues 1012 to 1066 show a composition bias toward acidic residues; sequence EEDEDSEKEEEEEDKEMEELQEDKECENPQEEEEEEEEEEEEEEEEEEEEAEEAE. Residues 1071-1087 show a composition bias toward low complexity; that stretch reads AAKTGGAVEEEAAQQAG. Positions 1097 to 1109 are enriched in basic and acidic residues; the sequence is ESKRLSEEKTNEA.

This sequence belongs to the delta-EF1/ZFH-1 C2H2-type zinc-finger family. As to quaternary structure, interacts (via N-terminus) with SMARCA4/BRG1. Ubiquitinated, leading to degradation in a proteasome-dependent manner. Deubiquitinated by USP51, leading to stabilization.

The protein localises to the nucleus. Acts as a transcriptional repressor. Binds to E-box sequences in the immunoglobulin heavy chain enhancer as well as in the regulatory regions of many other tissue-specific genes. Represses E-cadherin promoter and induces an epithelial-mesenchymal transition (EMT) by recruiting SMARCA4/BRG1. Represses BCL6 transcription in the presence of the corepressor CTBP1. Positively regulates neuronal differentiation. Represses RCOR1 transcription activation during neurogenesis. Represses transcription by binding to the E box (5'-CANNTG-3'). In the absence of TGFB1, acts as a repressor of COL1A2 transcription via binding to the E-box in the upstream enhancer region. The chain is Zinc finger E-box-binding homeobox 1 from Rattus norvegicus (Rat).